The primary structure comprises 347 residues: Protease HtpX homolog (347 aa).

The next 3 helical transmembrane spans lie at 8–28, 46–66, and 76–96; these read IAFG…VVIA, ALTA…IAIV, and WGFI…TYIA. H174 lines the Zn(2+) pocket. Residue E175 is part of the active site. H178 provides a ligand contact to Zn(2+). 2 helical membrane-spanning segments follow: residues 185-205 and 221-241; these read ALML…VSSV and LLAA…LLVL. Zn(2+) is bound at residue E248.

The protein belongs to the peptidase M48B family. Requires Zn(2+) as cofactor.

It is found in the cell membrane. The polypeptide is Protease HtpX homolog (Pyrobaculum islandicum (strain DSM 4184 / JCM 9189 / GEO3)).